A 239-amino-acid polypeptide reads, in one-letter code: MGASIDDYSLVHKNILHSEDLLKYILETSAYPREHEQLKGLREVTEKHEWSSALVPADEGLFLSMLLKLMNAKRTIEIGVYTGYSLLTTALALPEDGKITAIDVNKSFFEIGLPFIQKAGVEHKINFIESEALPVLDQMLQETKEEDLYDYAFVDADKSNYANYHERLVKLVRIGGAILYDNTLWYGSVAYPEYPGLHPEEEVARLSFRNLNTFLAADPRVEISQVSIGDGVTICRRLY.

S-adenosyl-L-methionine contacts are provided by residues Val55, Glu77, 79-80 (GV), Ser85, Asp103, and Ala132. An a divalent metal cation-binding site is contributed by Asp155. Asp157 contacts S-adenosyl-L-methionine. Residues Asp181 and Asn182 each coordinate a divalent metal cation.

Belongs to the class I-like SAM-binding methyltransferase superfamily. Cation-dependent O-methyltransferase family. Mg(2+) is required as a cofactor.

The enzyme catalyses norbelladine + S-adenosyl-L-methionine = 4'-O-methylnorbelladine + S-adenosyl-L-homocysteine + H(+). Its pathway is alkaloid biosynthesis. Its function is as follows. 4'-O-methyltransferase converting norbelladine to 4'-O-methylnorbelladine. 4'-O-methylnorbelladine is a precursor to all Amaryllidaceae alkaloids such as galanthamine, lycorine and haemanthamine, and including haemanthamine- and crinamine-type alkaloids, promising anticancer agents. This chain is Norbelladine 4'-O-methyltransferase 2, found in Narcissus aff. pseudonarcissus MK-2014 (Daffodil).